We begin with the raw amino-acid sequence, 602 residues long: Proteasome-associated ATPase (602 aa).

The stretch at proline 13–glutamine 89 forms a coiled coil. ATP is bound at residue glycine 289–leucine 294. The segment at tyrosine 601–leucine 602 is docks into pockets in the proteasome alpha-ring.

This sequence belongs to the AAA ATPase family. In terms of assembly, homohexamer. Assembles into a hexameric ring structure that caps the 20S proteasome core. Strongly interacts with the prokaryotic ubiquitin-like protein Pup through a hydrophobic interface; the interacting region of ARC lies in its N-terminal coiled-coil domain. There is one Pup binding site per ARC hexamer ring. Upon ATP-binding, the C-terminus of ARC interacts with the alpha-rings of the proteasome core, possibly by binding to the intersubunit pockets.

Its pathway is protein degradation; proteasomal Pup-dependent pathway. ATPase which is responsible for recognizing, binding, unfolding and translocation of pupylated proteins into the bacterial 20S proteasome core particle. May be essential for opening the gate of the 20S proteasome via an interaction with its C-terminus, thereby allowing substrate entry and access to the site of proteolysis. Thus, the C-termini of the proteasomal ATPase may function like a 'key in a lock' to induce gate opening and therefore regulate proteolysis. The chain is Proteasome-associated ATPase from Mycobacteroides abscessus (strain ATCC 19977 / DSM 44196 / CCUG 20993 / CIP 104536 / JCM 13569 / NCTC 13031 / TMC 1543 / L948) (Mycobacterium abscessus).